Consider the following 382-residue polypeptide: Anhydro-N-acetylmuramic acid kinase (382 aa).

9 to 16 (GTSLDGID) contributes to the ATP binding site.

This sequence belongs to the anhydro-N-acetylmuramic acid kinase family.

The catalysed reaction is 1,6-anhydro-N-acetyl-beta-muramate + ATP + H2O = N-acetyl-D-muramate 6-phosphate + ADP + H(+). Its pathway is amino-sugar metabolism; 1,6-anhydro-N-acetylmuramate degradation. It participates in cell wall biogenesis; peptidoglycan recycling. Its function is as follows. Catalyzes the specific phosphorylation of 1,6-anhydro-N-acetylmuramic acid (anhMurNAc) with the simultaneous cleavage of the 1,6-anhydro ring, generating MurNAc-6-P. Is required for the utilization of anhMurNAc either imported from the medium or derived from its own cell wall murein, and thus plays a role in cell wall recycling. The chain is Anhydro-N-acetylmuramic acid kinase from Bacillus cereus (strain AH820).